Consider the following 698-residue polypeptide: eEF1A lysine and N-terminal methyltransferase (698 aa).

At Met1 the chain carries N-acetylmethionine. Ser267 bears the Phosphoserine mark. Residues 431 to 461 (KDTSHRAQKKRKKDRKKQRPADTSEDFPPAP) are disordered. Residues 436–448 (RAQKKRKKDRKKQ) show a composition bias toward basic residues.

This sequence belongs to the methyltransferase superfamily. Forms a tripartite complex containing GAB1, METTL13 and SPRY2. Within the complex interacts with GAB1 and SPRY2. In terms of tissue distribution, expressed in the inner ear (at protein level). Expression is detected in the cochlear duct, spiral limbus region, efferent and afferent nerves, and in spiral ganglion neurons (at protein level).

It is found in the cytoplasm. It localises to the nucleus. The protein resides in the mitochondrion. It carries out the reaction L-lysyl-[protein] + S-adenosyl-L-methionine = N(6)-methyl-L-lysyl-[protein] + S-adenosyl-L-homocysteine + H(+). It catalyses the reaction N(6)-methyl-L-lysyl-[protein] + S-adenosyl-L-methionine = N(6),N(6)-dimethyl-L-lysyl-[protein] + S-adenosyl-L-homocysteine + H(+). The catalysed reaction is N-terminal glycyl-L-lysyl-L-glutamyl-[protein] + 3 S-adenosyl-L-methionine = N-terminal N,N,N-trimethyl-glycyl-L-lysyl-L-glutamyl-[protein] + 3 S-adenosyl-L-homocysteine + 3 H(+). In terms of biological role, dual methyltransferase that catalyzes methylation of elongation factor 1-alpha (EEF1A1 and EEF1A2) at two different positions, and is therefore involved in the regulation of mRNA translation. Via its C-terminus, methylates EEF1A1 and EEF1A2 at the N-terminal residue 'Gly-2'. Via its N-terminus dimethylates EEF1A1 and EEF1A2 at residue 'Lys-55'. Has no activity towards core histones H2A, H2B, H3 and H4. This is eEF1A lysine and N-terminal methyltransferase from Mus musculus (Mouse).